The following is a 659-amino-acid chain: Oligopeptide-binding protein AmiA (659 aa).

The first 22 residues, 1 to 22 (MKKNRVFATAGLVLLAAGVLAA), serve as a signal peptide directing secretion. Cys-23 is lipidated: N-palmitoyl cysteine. The S-diacylglycerol cysteine moiety is linked to residue Cys-23.

This sequence belongs to the bacterial solute-binding protein 5 family.

It localises to the cell membrane. Part of the binding-protein-dependent transport system for oligopeptides; probably an oligopeptide binding protein. This chain is Oligopeptide-binding protein AmiA (amiA), found in Streptococcus pneumoniae serotype 4 (strain ATCC BAA-334 / TIGR4).